The sequence spans 308 residues: Ribosomal RNA large subunit methyltransferase F (308 aa).

Belongs to the methyltransferase superfamily. METTL16/RlmF family.

The protein localises to the cytoplasm. It catalyses the reaction adenosine(1618) in 23S rRNA + S-adenosyl-L-methionine = N(6)-methyladenosine(1618) in 23S rRNA + S-adenosyl-L-homocysteine + H(+). In terms of biological role, specifically methylates the adenine in position 1618 of 23S rRNA. This chain is Ribosomal RNA large subunit methyltransferase F, found in Salmonella dublin (strain CT_02021853).